The primary structure comprises 108 residues: Nucleoid-associated protein Rmet_2128 (108 aa).

Residues 86–96 (TTQEKMGSMTS) show a composition bias toward polar residues. Positions 86–108 (TTQEKMGSMTSGLPLPPGFKLPF) are disordered. Positions 99-108 (PLPPGFKLPF) are enriched in pro residues.

The protein belongs to the YbaB/EbfC family. Homodimer.

The protein localises to the cytoplasm. It localises to the nucleoid. In terms of biological role, binds to DNA and alters its conformation. May be involved in regulation of gene expression, nucleoid organization and DNA protection. The polypeptide is Nucleoid-associated protein Rmet_2128 (Cupriavidus metallidurans (strain ATCC 43123 / DSM 2839 / NBRC 102507 / CH34) (Ralstonia metallidurans)).